A 172-amino-acid chain; its full sequence is Large ribosomal subunit protein uL10 (172 aa).

It belongs to the universal ribosomal protein uL10 family. In terms of assembly, part of the ribosomal stalk of the 50S ribosomal subunit. The N-terminus interacts with L11 and the large rRNA to form the base of the stalk. The C-terminus forms an elongated spine to which L12 dimers bind in a sequential fashion forming a multimeric L10(L12)X complex.

Functionally, forms part of the ribosomal stalk, playing a central role in the interaction of the ribosome with GTP-bound translation factors. The chain is Large ribosomal subunit protein uL10 from Chlorobium limicola (strain DSM 245 / NBRC 103803 / 6330).